We begin with the raw amino-acid sequence, 218 residues long: Deoxyribose-phosphate aldolase (218 aa).

Catalysis depends on Asp-89, which acts as the Proton donor/acceptor. Catalysis depends on Lys-152, which acts as the Schiff-base intermediate with acetaldehyde. The Proton donor/acceptor role is filled by Lys-182.

This sequence belongs to the DeoC/FbaB aldolase family. DeoC type 1 subfamily.

It is found in the cytoplasm. The enzyme catalyses 2-deoxy-D-ribose 5-phosphate = D-glyceraldehyde 3-phosphate + acetaldehyde. It participates in carbohydrate degradation; 2-deoxy-D-ribose 1-phosphate degradation; D-glyceraldehyde 3-phosphate and acetaldehyde from 2-deoxy-alpha-D-ribose 1-phosphate: step 2/2. Its function is as follows. Catalyzes a reversible aldol reaction between acetaldehyde and D-glyceraldehyde 3-phosphate to generate 2-deoxy-D-ribose 5-phosphate. This chain is Deoxyribose-phosphate aldolase, found in Kocuria rhizophila (strain ATCC 9341 / DSM 348 / NBRC 103217 / DC2201).